The primary structure comprises 449 residues: Acetolactate synthase small subunit 1, chloroplastic (449 aa).

The transit peptide at 1 to 30 directs the protein to the chloroplast; sequence MEHIQTRTTLSQLSTLPSDKRLGAIRFKCL. ACT domains follow at residues 31–98 and 259–333; these read LVMK…DLSK and TLSM…DITH.

This sequence belongs to the acetolactate synthase small subunit family. As to quaternary structure, the acetolactate synthase complex contains both large catalytic subunits and small regulatory subunits.

The protein resides in the plastid. The protein localises to the chloroplast. It functions in the pathway amino-acid biosynthesis; L-isoleucine biosynthesis; L-isoleucine from 2-oxobutanoate: step 1/4. The protein operates within amino-acid biosynthesis; L-valine biosynthesis; L-valine from pyruvate: step 1/4. Regulatory subunit of acetohydroxy-acid synthase. Probably involved in feedback inhibition by branched-chain amino acids. Not involved in herbicide tolerance. This Nicotiana plumbaginifolia (Leadwort-leaved tobacco) protein is Acetolactate synthase small subunit 1, chloroplastic.